A 35-amino-acid polypeptide reads, in one-letter code: Conotoxin TxMEKL-0422 (35 aa).

Residues 1 to 35 (NPASCCSCADVDPGRASRKTPKGEDQVFIKEKDRC) are disordered. Residues 21 to 35 (PKGEDQVFIKEKDRC) show a composition bias toward basic and acidic residues.

In terms of processing, contains disulfide bonds. In terms of tissue distribution, expressed by the venom duct.

It localises to the secreted. The protein is Conotoxin TxMEKL-0422 of Conus textile (Cloth-of-gold cone).